The following is a 287-amino-acid chain: Probable endonuclease 4 (287 aa).

Zn(2+) contacts are provided by H69, H109, E144, D178, H181, H215, D228, H230, and E260.

The protein belongs to the AP endonuclease 2 family. Zn(2+) is required as a cofactor.

It carries out the reaction Endonucleolytic cleavage to 5'-phosphooligonucleotide end-products.. In terms of biological role, endonuclease IV plays a role in DNA repair. It cleaves phosphodiester bonds at apurinic or apyrimidinic (AP) sites, generating a 3'-hydroxyl group and a 5'-terminal sugar phosphate. The chain is Probable endonuclease 4 from Thermotoga sp. (strain RQ2).